The sequence spans 184 residues: Small ribosomal subunit protein bS16 (184 aa).

A compositionally biased stretch (basic and acidic residues) spans Lys-150–Ala-160. Residues Lys-150–Glu-184 are disordered. The segment covering Pro-164–Ala-173 has biased composition (acidic residues). Over residues Glu-174 to Glu-184 the composition is skewed to low complexity.

This sequence belongs to the bacterial ribosomal protein bS16 family.

The polypeptide is Small ribosomal subunit protein bS16 (Bacteroides thetaiotaomicron (strain ATCC 29148 / DSM 2079 / JCM 5827 / CCUG 10774 / NCTC 10582 / VPI-5482 / E50)).